Here is a 795-residue protein sequence, read N- to C-terminus: Endoplasmin (795 aa).

Residues 1-21 (MKSAWALALACTLLLAASVTA) form the signal peptide. An SRT pseudosubstrate motif motif is present at residues 41–43 (SRT). N61 and N106 each carry an N-linked (GlcNAc...) asparagine glycan. N106, D148, N161, and F198 together coordinate ATP. N216 carries N-linked (GlcNAc...) asparagine glycosylation. Positions 289–316 (EEPVEEEEAKEEKEETDDNEAAVEEEEE) are enriched in acidic residues. The tract at residues 289-322 (EEPVEEEEAKEEKEETDDNEAAVEEEEEEKKPKT) is disordered. Residues N444, N480, and N501 are each glycosylated (N-linked (GlcNAc...) asparagine). The disordered stretch occupies residues 751–795 (DAKVEEEPEEPEDAAEEAEQDEEEVDADAEDSETQKESTDVKDEL). A compositionally biased stretch (acidic residues) spans 756-782 (EEPEEPEDAAEEAEQDEEEVDADAEDS). The span at 783–795 (ETQKESTDVKDEL) shows a compositional bias: basic and acidic residues. The short motif at 792-795 (KDEL) is the Prevents secretion from ER element.

The protein belongs to the heat shock protein 90 family. In terms of assembly, homodimer; disulfide-linked.

Its subcellular location is the endoplasmic reticulum lumen. The protein localises to the sarcoplasmic reticulum lumen. The catalysed reaction is ATP + H2O = ADP + phosphate + H(+). ATP-dependent chaperone involved in the processing of proteins in the endoplasmic reticulum, regulating their transport. The polypeptide is Endoplasmin (HSP90B1) (Gallus gallus (Chicken)).